The sequence spans 466 residues: Soluble pyridine nucleotide transhydrogenase (466 aa).

FAD is bound at residue 36 to 45 (ERYQNVGGGC).

It belongs to the class-I pyridine nucleotide-disulfide oxidoreductase family. As to quaternary structure, homooligomer; probable homooctamer. FAD serves as cofactor.

The protein resides in the cytoplasm. It carries out the reaction NAD(+) + NADPH = NADH + NADP(+). Functionally, conversion of NADPH, generated by peripheral catabolic pathways, to NADH, which can enter the respiratory chain for energy generation. The chain is Soluble pyridine nucleotide transhydrogenase from Escherichia coli O157:H7.